Reading from the N-terminus, the 451-residue chain is Exodeoxyribonuclease 7 large subunit (451 aa).

The protein belongs to the XseA family. In terms of assembly, heterooligomer composed of large and small subunits.

It is found in the cytoplasm. It carries out the reaction Exonucleolytic cleavage in either 5'- to 3'- or 3'- to 5'-direction to yield nucleoside 5'-phosphates.. Its function is as follows. Bidirectionally degrades single-stranded DNA into large acid-insoluble oligonucleotides, which are then degraded further into small acid-soluble oligonucleotides. The polypeptide is Exodeoxyribonuclease 7 large subunit (Bacillus cytotoxicus (strain DSM 22905 / CIP 110041 / 391-98 / NVH 391-98)).